Reading from the N-terminus, the 98-residue chain is Class II hydrophobin 5 (98 aa).

An N-terminal signal peptide occupies residues 1 to 17 (MQFSLALVTLLATAVSA). 4 disulfides stabilise this stretch: Cys30–Cys78, Cys39–Cys69, Cys40–Cys52, and Cys79–Cys90.

This sequence belongs to the cerato-ulmin hydrophobin family.

It is found in the secreted. It localises to the cell wall. Aerial growth, conidiation, and dispersal of filamentous fungi in the environment rely upon a capability of their secreting small amphipathic proteins called hydrophobins (HPBs) with low sequence identity. Class I can self-assemble into an outermost layer of rodlet bundles on aerial cell surfaces, conferring cellular hydrophobicity that supports fungal growth, development and dispersal; whereas Class II form highly ordered films at water-air interfaces through intermolecular interactions but contribute nothing to the rodlet structure. Does not seem to be important for the ability to cause seedling disease. This chain is Class II hydrophobin 5, found in Gibberella moniliformis (Maize ear and stalk rot fungus).